A 289-amino-acid chain; its full sequence is MAESVAHPSVLNATEEDIKQLLAASCHIGSKNLEIRMENYVWKRRADGVNIINIGKTWEKIVLAARIIATVENPADVCVVSSRPYGHRAVLKFAAHTGATAIAGRFTPGNFTNYITRTFREPRLIIATDPRADAQAIKEASYVNIPVIALCDTDSPLAHVDVAIPTNNKGYKSIGLVWWLLAREVLRLRGALTRTGAWDVMVDMYFYRDPEEIEREEEAKAAAEAAAEAATTAEAAAEFEAVAAGAVDADVLAAATAGQVGEGAWDEAATGDWSTVGASTSDWTATAAQ.

Belongs to the universal ribosomal protein uS2 family. Component of the small ribosomal subunit. Mature ribosomes consist of a small (40S) and a large (60S) subunit. The 40S subunit contains about 33 different proteins and 1 molecule of RNA (18S). The 60S subunit contains about 49 different proteins and 3 molecules of RNA (25S, 5.8S and 5S). Interacts with rps21.

The protein localises to the cytoplasm. Its function is as follows. Required for the assembly and/or stability of the 40S ribosomal subunit. Required for the processing of the 20S rRNA-precursor to mature 18S rRNA in a late step of the maturation of 40S ribosomal subunits. The protein is Small ribosomal subunit protein uS2C (rps0c) of Schizosaccharomyces japonicus (strain yFS275 / FY16936) (Fission yeast).